The following is a 1064-amino-acid chain: Valine--tRNA ligase, mitochondrial (1064 aa).

The transit peptide at 1-26 (MPHLPLASFRPPFWGLRHSRGLPRFH) directs the protein to the mitochondrion. Residues 25-65 (FHSVSTQSEPHGSPISRRNREAKQKRLREKQATLETDIAGE) form a disordered region. Positions 42 to 56 (RNREAKQKRLREKQA) are enriched in basic and acidic residues. The short motif at 146–156 (PNVTGSLHIGH) is the 'HIGH' region element. The short motif at 659 to 663 (KMSKS) is the 'KMSKS' region element. K662 provides a ligand contact to ATP.

The protein belongs to the class-I aminoacyl-tRNA synthetase family.

It localises to the mitochondrion. It catalyses the reaction tRNA(Val) + L-valine + ATP = L-valyl-tRNA(Val) + AMP + diphosphate. In terms of biological role, catalyzes the attachment of valine to tRNA(Val) in a two-step reaction: valine is first activated by ATP to form Val-AMP and then transferred to the acceptor end of tRNA(Val). This chain is Valine--tRNA ligase, mitochondrial (VARS2), found in Macaca mulatta (Rhesus macaque).